A 343-amino-acid polypeptide reads, in one-letter code: Protein RecA (343 aa).

66–73 (GPESSGKT) contacts ATP.

It belongs to the RecA family.

It is found in the cytoplasm. Functionally, can catalyze the hydrolysis of ATP in the presence of single-stranded DNA, the ATP-dependent uptake of single-stranded DNA by duplex DNA, and the ATP-dependent hybridization of homologous single-stranded DNAs. It interacts with LexA causing its activation and leading to its autocatalytic cleavage. This is Protein RecA from Nitrosomonas europaea (strain ATCC 19718 / CIP 103999 / KCTC 2705 / NBRC 14298).